Here is a 396-residue protein sequence, read N- to C-terminus: Mannonate dehydratase (396 aa).

It belongs to the mannonate dehydratase family. The cofactor is Fe(2+). Mn(2+) serves as cofactor.

The enzyme catalyses D-mannonate = 2-dehydro-3-deoxy-D-gluconate + H2O. The protein operates within carbohydrate metabolism; pentose and glucuronate interconversion. Functionally, catalyzes the dehydration of D-mannonate. This chain is Mannonate dehydratase, found in Serratia proteamaculans (strain 568).